We begin with the raw amino-acid sequence, 345 residues long: Phosphoribosylformylglycinamidine cyclo-ligase (345 aa).

Belongs to the AIR synthase family.

It localises to the cytoplasm. The catalysed reaction is 2-formamido-N(1)-(5-O-phospho-beta-D-ribosyl)acetamidine + ATP = 5-amino-1-(5-phospho-beta-D-ribosyl)imidazole + ADP + phosphate + H(+). The protein operates within purine metabolism; IMP biosynthesis via de novo pathway; 5-amino-1-(5-phospho-D-ribosyl)imidazole from N(2)-formyl-N(1)-(5-phospho-D-ribosyl)glycinamide: step 2/2. This Aeromonas hydrophila subsp. hydrophila (strain ATCC 7966 / DSM 30187 / BCRC 13018 / CCUG 14551 / JCM 1027 / KCTC 2358 / NCIMB 9240 / NCTC 8049) protein is Phosphoribosylformylglycinamidine cyclo-ligase.